Reading from the N-terminus, the 137-residue chain is uncharacterized protein (137 aa).

Residues Met-1–Pro-10 show a composition bias toward low complexity. Residues Met-1 to Val-23 are disordered. Gly residues predominate over residues Gly-11–Ala-20.

This is an uncharacterized protein from Human adenovirus C serotype 2 (HAdV-2).